Consider the following 705-residue polypeptide: Polyribonucleotide nucleotidyltransferase (705 aa).

Mg(2+) is bound by residues Asp494 and Asp500. Residues 561 to 620 enclose the KH domain; sequence PRITTVKVKPEKVRAVIGTGGKNIRQIVSETGVTIDVEDDGTVTIASSDMEASARAIAMV. Residues 630 to 698 enclose the S1 motif domain; it reads GKIYRGTVKK…KQGKIRLSRK (69 aa).

Belongs to the polyribonucleotide nucleotidyltransferase family. It depends on Mg(2+) as a cofactor.

It localises to the cytoplasm. It carries out the reaction RNA(n+1) + phosphate = RNA(n) + a ribonucleoside 5'-diphosphate. Its function is as follows. Involved in mRNA degradation. Catalyzes the phosphorolysis of single-stranded polyribonucleotides processively in the 3'- to 5'-direction. The protein is Polyribonucleotide nucleotidyltransferase of Syntrophus aciditrophicus (strain SB).